Consider the following 66-residue polypeptide: uncharacterized protein (66 aa).

Belongs to the YeeT/YkfH/YpjJ family.

This is an uncharacterized protein from Escherichia coli (strain K12).